The sequence spans 1791 residues: 1-phosphatidylinositol-3-phosphate 5-kinase FAB1B (1791 aa).

Residues 39 to 105 (DQSCRVCYEC…VCNYCFRQWE (67 aa)) form an FYVE-type zinc finger. C45, C48, C61, C64, C69, C72, C97, and C100 together coordinate Zn(2+). 4 disordered regions span residues 166-186 (HGVS…SRRS), 279-370 (EQFQ…DRTT), 770-790 (SDLS…NPIV), and 834-859 (QQNN…DHQS). Residues 279-293 (EQFQKKSEHDGRDEC) are compositionally biased toward basic and acidic residues. Residues 324–345 (PENEEDERESALFDEEDNEGDA) show a composition bias toward acidic residues. Basic and acidic residues predominate over residues 838 to 850 (EKPKETQSQKEEF). The stretch at 1077–1111 (EKGFRRRIGELEEVLQKEKAEFEENMQKILHREVN) forms a coiled coil. Residues 1151 to 1164 (NSDDTKREENEKPP) are compositionally biased toward basic and acidic residues. The interval 1151–1242 (NSDDTKREEN…DTSYPLENKV (92 aa)) is disordered. 2 stretches are compositionally biased toward polar residues: residues 1167–1188 (KSQT…SEVN) and 1196–1206 (TGDTGSLNNVQ). In terms of domain architecture, PIPK spans 1433–1758 (SELNIPRPVD…RFRKAMTTYF (326 aa)). The interval 1769 to 1791 (NVVANNSKSDQPEETSQAGTQAE) is disordered. Positions 1771–1791 (VANNSKSDQPEETSQAGTQAE) are enriched in polar residues.

Component of the PI(3,5)P2 regulatory complex at least composed of ATG18, SAC/FIG4, FAB1 and VAC14. The cofactor is Mg(2+). Mn(2+) is required as a cofactor. In terms of tissue distribution, ubiquitous with highest expression levels in the root hair zone, pollen, and stamens.

Its subcellular location is the endosome membrane. The catalysed reaction is a 1,2-diacyl-sn-glycero-3-phospho-(1D-myo-inositol-3-phosphate) + ATP = a 1,2-diacyl-sn-glycero-3-phospho-(1D-myo-inositol-3,5-bisphosphate) + ADP + H(+). Functionally, the PI(3,5)P2 regulatory complex regulates both the synthesis and turnover of phosphatidylinositol 3,5-bisphosphate (PtdIns(3,5)P2). Catalyzes the phosphorylation of phosphatidylinositol 3-phosphate on the fifth hydroxyl of the myo-inositol ring, to form phosphatidylinositol 3,5-bisphosphate. Plays an important role in maintenance of endomembrane homeostasis including endocytosis, vacuole formation, and vacuolar acidification processes. Required for development of viable pollen. Might mediate recycling of auxin transporters. In Arabidopsis thaliana (Mouse-ear cress), this protein is 1-phosphatidylinositol-3-phosphate 5-kinase FAB1B (FAB1B).